The primary structure comprises 120 residues: Large ribosomal subunit protein uL18 (120 aa).

The protein belongs to the universal ribosomal protein uL18 family. As to quaternary structure, part of the 50S ribosomal subunit; part of the 5S rRNA/L5/L18/L25 subcomplex. Contacts the 5S and 23S rRNAs.

This is one of the proteins that bind and probably mediate the attachment of the 5S RNA into the large ribosomal subunit, where it forms part of the central protuberance. This chain is Large ribosomal subunit protein uL18, found in Rhodopseudomonas palustris (strain HaA2).